The sequence spans 244 residues: Protein FAM168A (244 aa).

An N-acetylmethionine modification is found at M1. The residue at position 102 (R102) is an Asymmetric dimethylarginine. The interval 107–126 (TPYKVPPTQSNTAPPPYSPS) is disordered.

This sequence belongs to the FAM168 family. In terms of assembly, interacts with POLB. Interacts with AKT1 and MT1X. May interact with FAM168B.

In terms of biological role, in cancer context, protects cells from induced-DNA damage and apoptosis. Acts, at least in part, through PI3K/AKT/NFKB signaling pathway and by preventing POLB degradation. Decreases POLB ubiquitation and stabilizes its protein levels. This is Protein FAM168A (Fam168a) from Mus musculus (Mouse).